The chain runs to 475 residues: Ribulose bisphosphate carboxylase large chain (475 aa).

Residues 1 to 2 (MS) constitute a propeptide that is removed on maturation. An N-acetylproline modification is found at Pro3. Positions 123 and 173 each coordinate substrate. Lys175 acts as the Proton acceptor in catalysis. Lys177 provides a ligand contact to substrate. Residues Lys201, Asp203, and Glu204 each coordinate Mg(2+). Lys201 carries the post-translational modification N6-carboxylysine. The active-site Proton acceptor is the His294. Residues Arg295, His327, and Ser379 each contribute to the substrate site.

The protein belongs to the RuBisCO large chain family. Type I subfamily. In terms of assembly, heterohexadecamer of 8 large chains and 8 small chains; disulfide-linked. The disulfide link is formed within the large subunit homodimers. It depends on Mg(2+) as a cofactor. The disulfide bond which can form in the large chain dimeric partners within the hexadecamer appears to be associated with oxidative stress and protein turnover.

Its subcellular location is the plastid. It localises to the chloroplast. The enzyme catalyses 2 (2R)-3-phosphoglycerate + 2 H(+) = D-ribulose 1,5-bisphosphate + CO2 + H2O. The catalysed reaction is D-ribulose 1,5-bisphosphate + O2 = 2-phosphoglycolate + (2R)-3-phosphoglycerate + 2 H(+). RuBisCO catalyzes two reactions: the carboxylation of D-ribulose 1,5-bisphosphate, the primary event in carbon dioxide fixation, as well as the oxidative fragmentation of the pentose substrate in the photorespiration process. Both reactions occur simultaneously and in competition at the same active site. The polypeptide is Ribulose bisphosphate carboxylase large chain (Welwitschia mirabilis (Tree tumbo)).